Reading from the N-terminus, the 374-residue chain is All-trans-retinol dehydrogenase [NAD(+)] ADH7 (374 aa).

Methionine 1 carries the post-translational modification N-acetylmethionine. Residues cysteine 47, histidine 68, cysteine 98, cysteine 101, cysteine 104, cysteine 112, and cysteine 174 each contribute to the Zn(2+) site. Residues 199–204 (GLGGVG), aspartate 223, lysine 228, 292–294 (VGA), and arginine 369 each bind NAD(+).

The protein belongs to the zinc-containing alcohol dehydrogenase family. Class-IV subfamily. In terms of assembly, homodimer. The cofactor is Zn(2+). Preferentially expressed in stomach.

It is found in the cytoplasm. It catalyses the reaction a primary alcohol + NAD(+) = an aldehyde + NADH + H(+). The catalysed reaction is 10-hydroxydecanoate + NAD(+) = 10-oxodecanoate + NADH + H(+). It carries out the reaction all-trans-retinol + NAD(+) = all-trans-retinal + NADH + H(+). The enzyme catalyses 9-cis-retinol + NAD(+) = 9-cis-retinal + NADH + H(+). It catalyses the reaction all-trans-3,4-didehydroretinol + NAD(+) = all-trans-3,4-didehydroretinal + NADH + H(+). The catalysed reaction is all-trans-4-hydroxyretinol + NAD(+) = all-trans-4-hydroxyretinal + NADH + H(+). It carries out the reaction all-trans-4-oxoretinol + NAD(+) = all-trans-4-oxoretinal + NADH + H(+). The enzyme catalyses 12-hydroxydodecanoate + NAD(+) = 12-oxododecanoate + NADH + H(+). It catalyses the reaction 16-hydroxyhexadecanoate + NAD(+) = 16-oxohexadecanoate + NADH + H(+). The catalysed reaction is hexan-1-ol + NAD(+) = hexanal + NADH + H(+). It carries out the reaction (E)-hex-2-en-1-ol + NAD(+) = (E)-hex-2-enal + NADH + H(+). The enzyme catalyses (E)-4-hydroxynon-2-en-1-ol + NAD(+) = (E)-4-hydroxynon-2-enal + NADH + H(+). With respect to regulation, retinol oxidation is inhibited by the detergent Tween 80. Ethanol inhibits both all-trans-retinol and 9-cis-retinol oxidation. 13-cis-retinol is an effective competitive inhibitor of the 9-cis-retinol oxidation. All-trans-retinoic acid is a powerful inhibitor of all-trans-retinol oxidation. 13-cis-retinoic acid is a powerful inhibitor of all-trans-retinol oxidation. Cimetidine and ranitidine inhibited ethanol oxidation. Its function is as follows. Catalyzes the NAD-dependent oxidation of all-trans-retinol, alcohol, aldehyde and omega-hydroxy fatty acids and their derivatives. Oxidizes preferentially all trans-retinol, all-trans-4-hydroxyretinol, 9-cis-retinol, 2-hexenol, and long chain omega-hydroxy fatty acids such as juniperic acid. In vitro can also catalyze the NADH-dependent reduction of all-trans-retinal and aldehydes and their derivatives. Reduces preferentially all trans-retinal, all-trans-4-oxoretinal and hexanal. Catalyzes in the oxidative direction with higher efficiency. Therefore may participate in retinoid metabolism, fatty acid omega-oxidation, and elimination of cytotoxic aldehydes produced by lipid peroxidation. The protein is All-trans-retinol dehydrogenase [NAD(+)] ADH7 (Adh7) of Rattus norvegicus (Rat).